Here is a 241-residue protein sequence, read N- to C-terminus: Large ribosomal subunit protein uL13c (241 aa).

A chloroplast-targeting transit peptide spans 1–50 (MAVLCSSSTVILSSSSVKSSGSERKSPFLGFSLTAISKPSVRVGIYANSK).

Belongs to the universal ribosomal protein uL13 family. In terms of assembly, part of the 50S ribosomal subunit.

Its subcellular location is the plastid. The protein resides in the chloroplast. In Arabidopsis thaliana (Mouse-ear cress), this protein is Large ribosomal subunit protein uL13c (RPL13).